The following is a 260-amino-acid chain: Ubiquinone/menaquinone biosynthesis C-methyltransferase UbiE (260 aa).

S-adenosyl-L-methionine contacts are provided by residues Thr-83, Asp-104, 132–133 (NA), and Ser-149.

This sequence belongs to the class I-like SAM-binding methyltransferase superfamily. MenG/UbiE family.

The catalysed reaction is a 2-demethylmenaquinol + S-adenosyl-L-methionine = a menaquinol + S-adenosyl-L-homocysteine + H(+). The enzyme catalyses a 2-methoxy-6-(all-trans-polyprenyl)benzene-1,4-diol + S-adenosyl-L-methionine = a 5-methoxy-2-methyl-3-(all-trans-polyprenyl)benzene-1,4-diol + S-adenosyl-L-homocysteine + H(+). Its pathway is quinol/quinone metabolism; menaquinone biosynthesis; menaquinol from 1,4-dihydroxy-2-naphthoate: step 2/2. It functions in the pathway cofactor biosynthesis; ubiquinone biosynthesis. Functionally, methyltransferase required for the conversion of demethylmenaquinol (DMKH2) to menaquinol (MKH2) and the conversion of 2-polyprenyl-6-methoxy-1,4-benzoquinol (DDMQH2) to 2-polyprenyl-3-methyl-6-methoxy-1,4-benzoquinol (DMQH2). This is Ubiquinone/menaquinone biosynthesis C-methyltransferase UbiE from Vibrio vulnificus (strain CMCP6).